We begin with the raw amino-acid sequence, 459 residues long: Cysteine--tRNA ligase (459 aa).

Zn(2+) is bound at residue Cys-28. A 'HIGH' region motif is present at residues 30 to 40; sequence VTVYDLCHIGH. Positions 209, 234, and 238 each coordinate Zn(2+). The 'KMSKS' region signature appears at 266-270; the sequence is KMSKS. Lys-269 is a binding site for ATP.

The protein belongs to the class-I aminoacyl-tRNA synthetase family. Monomer. It depends on Zn(2+) as a cofactor.

It is found in the cytoplasm. It catalyses the reaction tRNA(Cys) + L-cysteine + ATP = L-cysteinyl-tRNA(Cys) + AMP + diphosphate. This chain is Cysteine--tRNA ligase, found in Histophilus somni (strain 2336) (Haemophilus somnus).